Reading from the N-terminus, the 49-residue chain is Large ribosomal subunit protein bL33B (49 aa).

Belongs to the bacterial ribosomal protein bL33 family.

This chain is Large ribosomal subunit protein bL33B, found in Lactobacillus gasseri (strain ATCC 33323 / DSM 20243 / BCRC 14619 / CIP 102991 / JCM 1131 / KCTC 3163 / NCIMB 11718 / NCTC 13722 / AM63).